We begin with the raw amino-acid sequence, 130 residues long: Small ribosomal subunit protein uS9 (130 aa).

This sequence belongs to the universal ribosomal protein uS9 family.

The polypeptide is Small ribosomal subunit protein uS9 (Nitratidesulfovibrio vulgaris (strain ATCC 29579 / DSM 644 / CCUG 34227 / NCIMB 8303 / VKM B-1760 / Hildenborough) (Desulfovibrio vulgaris)).